We begin with the raw amino-acid sequence, 514 residues long: Adenylosuccinate synthetase 2, chloroplastic (514 aa).

The N-terminal 56 residues, 1–56 (MAMAAAAAVASQGLLATSSQQQKKSSAKLICNAATFFSGKRLLWVKSCNNGAVGLR), are a transit peptide targeting the chloroplast. Residues 100 to 106 (GDEGKGK) and 128 to 130 (GHT) each bind GTP. The active-site Proton acceptor is the D101. Residues D101 and G128 each contribute to the Mg(2+) site. Residues 101–104 (DEGK), 126–129 (NAGH), T218, R232, Q312, T327, and R391 each bind IMP. Catalysis depends on H129, which acts as the Proton donor. 387–393 (TTTGRPR) is a substrate binding site. Residues R393, 419 to 421 (KLD), and 502 to 504 (GVG) each bind GTP.

This sequence belongs to the adenylosuccinate synthetase family. In terms of assembly, homodimer. Requires Mg(2+) as cofactor.

Its subcellular location is the plastid. It is found in the chloroplast. It catalyses the reaction IMP + L-aspartate + GTP = N(6)-(1,2-dicarboxyethyl)-AMP + GDP + phosphate + 2 H(+). It functions in the pathway purine metabolism; AMP biosynthesis via de novo pathway; AMP from IMP: step 1/2. Its function is as follows. Plays an important role in the de novo pathway and in the salvage pathway of purine nucleotide biosynthesis. Catalyzes the first committed step in the biosynthesis of AMP from IMP. This is Adenylosuccinate synthetase 2, chloroplastic from Physcomitrium patens (Spreading-leaved earth moss).